The following is a 193-amino-acid chain: Ras-like protein 2 (193 aa).

Position 12–19 (12–19) interacts with GTP; it reads GGGGVGKS. The short motif at 34-42 is the Effector region element; the sequence is YDPTIEDSY. Residues 59 to 63 and 118 to 121 contribute to the GTP site; these read DTAGQ and NKCD. Cys-190 is subject to Cysteine methyl ester. The S-geranylgeranyl cysteine moiety is linked to residue Cys-190. A propeptide spans 191-193 (removed in mature form); that stretch reads KLL.

This sequence belongs to the small GTPase superfamily. Ras family.

Its subcellular location is the cell membrane. It carries out the reaction GTP + H2O = GDP + phosphate + H(+). Functionally, ras proteins bind GDP/GTP and possess intrinsic GTPase activity. This Physarum polycephalum (Slime mold) protein is Ras-like protein 2 (RAS-2).